Here is a 226-residue protein sequence, read N- to C-terminus: MTTTELVALLHLASPALPIGAYSYSQGLEAALDANLIHDADTARDWIASGLTDVLAHGELPFLAHQLARWHAHDTPALVTENAWFIASRESAELRRETEQMGWSLAQLCASLEWGDAARRATLAAMTPIALPTAFAYAAAAHDASADAVLAAYAFGWVENQTSAALKAVPLGQLAGQRIIVALRGAIDAAVRRALATPPDAVNTFAPQLGILSARHETQYSRLFRS.

Belongs to the UreF family. As to quaternary structure, ureD, UreF and UreG form a complex that acts as a GTP-hydrolysis-dependent molecular chaperone, activating the urease apoprotein by helping to assemble the nickel containing metallocenter of UreC. The UreE protein probably delivers the nickel.

It is found in the cytoplasm. In terms of biological role, required for maturation of urease via the functional incorporation of the urease nickel metallocenter. The chain is Urease accessory protein UreF from Burkholderia lata (strain ATCC 17760 / DSM 23089 / LMG 22485 / NCIMB 9086 / R18194 / 383).